Here is a 216-residue protein sequence, read N- to C-terminus: Holliday junction branch migration complex subunit RuvA (216 aa).

The interval 1-64 (MISFIKGVLI…EDAQQLYGFK (64 aa)) is domain I. The domain II stretch occupies residues 65-143 (SKVDKKVFQE…KMANEIYAQT (79 aa)). The interval 144–163 (SGTTTTSQDSQAQQAPTSVV) is flexible linker. Residues 164 to 216 (LANSIFNESVDALLALGYKQKDAEKMARSAMGDATTAAEVIRKALQGSIKSKR) form a domain III region.

This sequence belongs to the RuvA family. In terms of assembly, homotetramer. Forms an RuvA(8)-RuvB(12)-Holliday junction (HJ) complex. HJ DNA is sandwiched between 2 RuvA tetramers; dsDNA enters through RuvA and exits via RuvB. An RuvB hexamer assembles on each DNA strand where it exits the tetramer. Each RuvB hexamer is contacted by two RuvA subunits (via domain III) on 2 adjacent RuvB subunits; this complex drives branch migration. In the full resolvosome a probable DNA-RuvA(4)-RuvB(12)-RuvC(2) complex forms which resolves the HJ.

The protein resides in the cytoplasm. Its function is as follows. The RuvA-RuvB-RuvC complex processes Holliday junction (HJ) DNA during genetic recombination and DNA repair, while the RuvA-RuvB complex plays an important role in the rescue of blocked DNA replication forks via replication fork reversal (RFR). RuvA specifically binds to HJ cruciform DNA, conferring on it an open structure. The RuvB hexamer acts as an ATP-dependent pump, pulling dsDNA into and through the RuvAB complex. HJ branch migration allows RuvC to scan DNA until it finds its consensus sequence, where it cleaves and resolves the cruciform DNA. This is Holliday junction branch migration complex subunit RuvA from Francisella tularensis subsp. mediasiatica (strain FSC147).